We begin with the raw amino-acid sequence, 343 residues long: Sulfate/thiosulfate import ATP-binding protein CysA (343 aa).

The region spanning 3-233 (ILIENISKTF…PATPFVMGFM (231 aa)) is the ABC transporter domain. 35–42 (GPSGSGKS) is an ATP binding site.

The protein belongs to the ABC transporter superfamily. Sulfate/tungstate importer (TC 3.A.1.6) family.

The protein resides in the plastid. The protein localises to the chloroplast. The catalysed reaction is sulfate(out) + ATP + H2O = sulfate(in) + ADP + phosphate + H(+). It catalyses the reaction thiosulfate(out) + ATP + H2O = thiosulfate(in) + ADP + phosphate + H(+). Part of the ABC transporter complex involved in sulfate/thiosulfate import. Responsible for energy coupling to the transport system. This chain is Sulfate/thiosulfate import ATP-binding protein CysA, found in Nephroselmis olivacea (Green alga).